A 248-amino-acid polypeptide reads, in one-letter code: Probable transcriptional regulatory protein trd_1132 (248 aa).

It belongs to the TACO1 family.

Its subcellular location is the cytoplasm. In Thermomicrobium roseum (strain ATCC 27502 / DSM 5159 / P-2), this protein is Probable transcriptional regulatory protein trd_1132.